The primary structure comprises 732 residues: MDNPGPSLRGAFGILGALERDRLTHLKHKLGSLCSGSQESKLLHAMVLLALGQDTEARVSLESLKMNTVAQLVAHQWADMETTEGPEEPPDLSWTVARLYHLLAEENLCPASTRDMAYQVALRDFASQGDHQLGQLQNEAWDRCSSDIKGDPSGFQPLHSHQGSLQPPSASPAVTRSQPRPIDTPDWSWGHTLHSTNSTASLASHLEISQSPTLAFLSSHHGTHGPSKLCNTPLDTQEPQLVPEGCQEPEEISWPPSVETSVSLGLPHEISVPEVSPEEASPILPDALAAPDTSVHCPIECTELSTNSRSPLTSTTESVGKQWPITSQRSPQVPVGDDSLQNTTSSSPPAQPPSLQASPKLPPSPLSSASSPSSYPAPPTSTSPVLDHSETSDQKFYNFVVIHARADEQVALRIREKLETLGVPDGATFCEEFQVPGRGELHCLQDAIDHSGFTILLLTASFDCSLSLHQINHALMNSLTQSGRQDCVIPLLPLECSQAQLSPDTTRLLHSIVWLDEHSPIFARKVANTFKTQKLQAQRVRWKKAQEARTLKEQSIQLEAERQNVAAISAAYTAYVHSYRAWQAEMNKLGVAFGKNLSLGTPTPSWPGCPQPIPSHPQGGTPVFPYSPQPPSFPQPPCFPQPPSFPQPPSFPLPPVSSPQSQSFPSASSPAPQTPGPQPLIIHHAQMVQLGVNNHMWGHTGAQSSDDKTECSENPCMGPLTDQGEPLLETPE.

Positions 1-153 (MDNPGPSLRG…CSSDIKGDPS (153 aa)) are TRIF-NTD. The TRAF6-binding signature appears at 84 to 91 (EGPEEPPD). The disordered stretch occupies residues 144-191 (CSSDIKGDPSGFQPLHSHQGSLQPPSASPAVTRSQPRPIDTPDWSWGH). Polar residues predominate over residues 159–178 (HSHQGSLQPPSASPAVTRSQ). The pLxIS motif signature appears at 206–209 (LEIS). Serine 209 bears the Phosphoserine mark. Residue lysine 228 forms a Glycyl lysine isopeptide (Lys-Gly) (interchain with G-Cter in ubiquitin) linkage. 2 consecutive short sequence motifs (TRAF6-binding) follow at residues 247–254 (QEPEEISW) and 296–306 (HCPIECTELST). A compositionally biased stretch (polar residues) spans 305–331 (STNSRSPLTSTTESVGKQWPITSQRSP). The disordered stretch occupies residues 305 to 389 (STNSRSPLTS…TSTSPVLDHS (85 aa)). Low complexity predominate over residues 345–359 (SSSPPAQPPSLQASP). The TIR domain occupies 395-534 (KFYNFVVIHA…KVANTFKTQK (140 aa)). A sufficient to induce apoptosis region spans residues 514–713 (WLDEHSPIFA…SSDDKTECSE (200 aa)). Disordered regions lie at residues 603–679 (TPSW…GPQP) and 696–732 (MWGHTGAQSSDDKTECSENPCMGPLTDQGEPLLETPE). Pro residues-rich tracts occupy residues 604-615 (PSWPGCPQPIPS) and 625-657 (PYSPQPPSFPQPPCFPQPPSFPQPPSFPLPPVS). A compositionally biased stretch (low complexity) spans 658–671 (SPQSQSFPSASSPA).

In terms of assembly, homodimer. Found in a multi-helicase-TICAM1 complex at least composed of DHX36, DDX1, DDX21 and TICAM1; this complex exists in resting cells with or without poly(I:C) RNA ligand stimulation. Interacts (via TIR domain) with DDX21 (via C-terminus). Interacts (via TIR domain) with DHX36 (via C-terminus). Interacts with AZI2 and IRF7. Interacts (when phosphorylated) with IRF3; following activation and phosphorylation on the pLxIS motif by TBK1, recruits IRF3. Interacts with TICAM2 in TLR4 recruitment. Interaction with PIAS4 inhibits the TICAM1-induced NF-kappa-B, IRF and IFNB1 activation. Interacts with IKBKB and IKBKE. Interaction with SARM1 blocks TICAM1-dependent transcription factor activation. Interacts with TRAF3. Interacts with TRAFD1. Interacts with UBQLN1 (via UBA domain). Interacts with TBK1, TRAF6 and RIPK1 and these interactions are enhanced in the presence of WDFY1. Interacts (via the TIR domain) with TLR3 in response to poly(I:C) and this interaction is enhanced in the presence of WDFY1. Interacts with TLR4 in response to poly(I:C) in a WDFY1-dependent manner. Interacts with WDFY1 in response to poly(I:C). Interacts with TRIM56. Interacts (via the TIR domain) with TLR5. Interacts with TRIM8. Interacts with TAX1BP1 and TRIM32; these interactions target TICAM1 to TAX1BP1-mediated selective autophagic degradation. Interacts with DDX50. Post-translationally, phosphorylated by TBK1. Following activation, phosphorylated by TBK1 at Ser-209 in the pLxIS motif. The phosphorylated pLxIS motif constitutes an IRF3-binding motif, leading to recruitment of the transcription factor IRF3 to induce type-I interferons and other cytokines. In terms of processing, polyubiquitinated at Lys-228 by TRIM38 with 'Lys-48'-linked chains, leading to proteasomal degradation. Polyubiquitinated with 'Lys-6'- and 'Lys-33'-linked chains in a TRIM8-dependent manner; ubiquitination disrupts the interaction with TBK1 and subsequent interferon production.

The protein localises to the cytoplasm. Its subcellular location is the cytosol. It is found in the cytoplasmic vesicle. The protein resides in the autophagosome. It localises to the mitochondrion. Involved in innate immunity against invading pathogens. Adapter used by TLR3, TLR4 (through TICAM2) and TLR5 to mediate NF-kappa-B and interferon-regulatory factor (IRF) activation, and to induce apoptosis. Ligand binding to these receptors results in TRIF recruitment through its TIR domain. Distinct protein-interaction motifs allow recruitment of the effector proteins TBK1, TRAF6 and RIPK1, which in turn, lead to the activation of transcription factors IRF3 and IRF7, NF-kappa-B and FADD respectively. Phosphorylation by TBK1 on the pLxIS motif leads to recruitment and subsequent activation of the transcription factor IRF3 to induce expression of type I interferon and exert a potent immunity against invading pathogens. Component of a multi-helicase-TICAM1 complex that acts as a cytoplasmic sensor of viral double-stranded RNA (dsRNA) and plays a role in the activation of a cascade of antiviral responses including the induction of pro-inflammatory cytokines. The protein is TIR domain-containing adapter molecule 1 (Ticam1) of Mus musculus (Mouse).